The sequence spans 115 residues: Divalent-cation tolerance protein CutA (115 aa).

Cu cation is bound by residues C19, H86, and H87.

It belongs to the CutA family. Homotrimer. It depends on Cu cation as a cofactor.

The protein localises to the cytoplasm. Its function is as follows. Involved in resistance toward heavy metals. The chain is Divalent-cation tolerance protein CutA from Citrobacter koseri (strain ATCC BAA-895 / CDC 4225-83 / SGSC4696).